A 414-amino-acid chain; its full sequence is MVLGKVKSLTISFDCLNDSNVPVYSSGDTVSGRVNLEVTGEIRVKSLKIHARGHAKVRWTESRNAGSNTAYTQNYTEEVEYFNHKDILIGHERDDDNCEEGFSTIHSGRHEYAFSFELPQTPLATSFEGRHGSVRYWVKAELHRPWLLPVKLKKEFTVFEHIDINTPSLLSPQAGTKEKTLCCWFCTSGPISLSAKIERKGYTPGESIQIFAEIENCSSRMVVPKAAIYQTQAFYAKGKMKEVKQLVANLRGESLSSGKTETWDGKLLKIPPVSPSILDCSIIRVEYSLMVYVDIPGAMDLLLSLPLVIGTIPLHPFGSRTSSVSSQCSMNMNWLGLSLPERPEAPPSYAEVVTEEQRRNNLAPVSACDDFERALQGPLFAYIQEFRFLPPPLYSEIDPNPDQSSEDRPSCPSR.

2 consecutive short sequence motifs (PPxY motif) follow at residues 346–349 (PPSY) and 391–394 (PPLY). The disordered stretch occupies residues 393–414 (LYSEIDPNPDQSSEDRPSCPSR). The span at 405–414 (SEDRPSCPSR) shows a compositional bias: basic and acidic residues.

The protein belongs to the arrestin family. In terms of assembly, interacts (via PPxY motifs) with NEDD4 (via WW domains). Interacts with ADRB2. Interacts with ADRB3. Interacts with HGS (via PPxY motifs). Does not bind TXN (thioredoxin). Interacts with ITCH.

Its subcellular location is the cytoplasm. The protein resides in the cell membrane. It localises to the lysosome. It is found in the endosome. The protein localises to the early endosome. In terms of biological role, adapter protein that plays a role in regulating cell-surface expression of adrenergic receptors and probably also other G protein-coupled receptors. Plays a role in NEDD4-mediated ubiquitination and endocytosis af activated ADRB2 and subsequent ADRB2 degradation. May recruit NEDD4 to ADRB2. Alternatively, may function as adapter protein that does not play a major role in recruiting NEDD4 to ADRB2, but rather plays a role in a targeting ADRB2 to endosomes. The chain is Arrestin domain-containing protein 3 (Arrdc3) from Rattus norvegicus (Rat).